Here is a 542-residue protein sequence, read N- to C-terminus: MSAKEVRFGTDARGRMLKGINTLADTVKITLGPKGRNVILDTSYGAPRITKDGVTVAREIELSDRFENVGAQMVKEVASRTNEEAGDGTTTATVLAQAIAKEGMKAVAAGMNPMDLKRGIDRAVAIVIAEIRSMSRPVGDSAEIAKVGALSANGEAAIGRQIADAMAKVGTAGVIKVEENKGLETETEVVEGMQFDRGYLSPYFITHAQKMVVELDDCAILLHEGKLTSLASMVPLLEAVVQAEKQLLVVAEDVEGEALTTLVVNKLRGGLKVAAAKAPGFGDGRAAMLEDLAVLTGAHLISAELGTKLETVTLDMLGFAKKVVLTKDSTILIDSAGDKAAIASRIGQIRNQIEDTTSAYNKEKLQERLARLAGGVAVIRVGGATEIEVKERRDRVEDTLNATRAAVQEGVVPGGGAALIHAGKALAGLKGDNPDQDAGIKIIRRAIQAPLRQIADNAGIDGSVVAGKVIENDSATFGFDAQLETYGDMLQAGIIDPTKVVRIALEDAASIAGLLITTEVIIAHKPERGERMSQMDEMGGMM.

ATP is bound by residues 30–33, lysine 51, 87–91, glycine 415, and aspartate 496; these read TLGP and DGTTT.

The protein belongs to the chaperonin (HSP60) family. Forms a cylinder of 14 subunits composed of two heptameric rings stacked back-to-back. Interacts with the co-chaperonin GroES.

The protein localises to the cytoplasm. The enzyme catalyses ATP + H2O + a folded polypeptide = ADP + phosphate + an unfolded polypeptide.. Its function is as follows. Together with its co-chaperonin GroES, plays an essential role in assisting protein folding. The GroEL-GroES system forms a nano-cage that allows encapsulation of the non-native substrate proteins and provides a physical environment optimized to promote and accelerate protein folding. The chain is Chaperonin GroEL 2 from Cereibacter sphaeroides (strain ATCC 17023 / DSM 158 / JCM 6121 / CCUG 31486 / LMG 2827 / NBRC 12203 / NCIMB 8253 / ATH 2.4.1.) (Rhodobacter sphaeroides).